Here is a 339-residue protein sequence, read N- to C-terminus: Serine/arginine-rich splicing factor 6 (339 aa).

The RRM 1 domain maps to 2 to 72; the sequence is PRVYIGRLSY…ERVIVEHARG (71 aa). Phosphoserine occurs at positions 45, 81, and 84. The segment at 75–103 is disordered; it reads RDRDGYSYGSRSGGGGYSSRRTSGRDKYG. The 74-residue stretch at 110–183 folds into the RRM 2 domain; the sequence is YRLIVENLSS…RNIRLIEDKP (74 aa). N6-acetyllysine is present on K165. Positions 176 to 339 are disordered; the sequence is IRLIEDKPRT…RSRSRSSSRD (164 aa). A Glycyl lysine isopeptide (Lys-Gly) (interchain with G-Cter in SUMO2) cross-link involves residue K182. The segment covering 185–250 has biased composition (basic residues); that stretch reads TSHRRSYSGS…RKSRSKSKSK (66 aa). A compositionally biased stretch (basic and acidic residues) spans 280-291; that stretch reads SPKENGKGDIKS. Phosphoserine occurs at positions 297 and 299. S303 carries the post-translational modification Phosphoserine; by DYRK1A. Phosphoserine occurs at positions 314 and 316. The span at 321 to 339 shows a compositional bias: basic residues; that stretch reads RASRSRSRSRSRSRSSSRD.

The protein belongs to the splicing factor SR family. In terms of assembly, binds SREK1/SFRS12. Interacts with DYRK1A. Interacts with RBMY; the interaction inhibits SRSF6 pre-mRNA splicing. Extensively phosphorylated on serine residues in the RS domain. Phosphorylated by DYRK1A, probably in the RS domain. Phosphorylation by DYRK1A modulates alternative splice site selection and inhibits the expression of MAPT/Tau exon 10.

The protein resides in the nucleus. It localises to the nucleus speckle. Functionally, plays a role in constitutive splicing and modulates the selection of alternative splice sites. Plays a role in the alternative splicing of MAPT/Tau exon 10. Binds to alternative exons of TNC pre-mRNA and promotes the expression of alternatively spliced TNC. Plays a role in wound healing and in the regulation of keratinocyte differentiation and proliferation via its role in alternative splicing. The protein is Serine/arginine-rich splicing factor 6 (Srsf6) of Mus musculus (Mouse).